The following is a 164-amino-acid chain: Ubiquitin-fold modifier-conjugating enzyme 1 (164 aa).

The Glycyl thioester intermediate role is filled by cysteine 116.

The protein belongs to the ubiquitin-conjugating enzyme family. UFC1 subfamily.

Its function is as follows. E2-like enzyme which forms an intermediate with UFM1 via a thioester linkage. The protein is Ubiquitin-fold modifier-conjugating enzyme 1 of Drosophila persimilis (Fruit fly).